Here is a 117-residue protein sequence, read N- to C-terminus: Spanin, inner membrane subunit (117 aa).

Residues 1-2 (MH) lie on the Cytoplasmic side of the membrane. A helical; Signal-anchor for type II membrane protein transmembrane segment spans residues 3-23 (VSNFTAGLLLLVIAFGGTSII). Residues 24-93 (LKHKVERLET…AKKADVVAHK (70 aa)) adopt a coiled-coil conformation. Residues 24-117 (LKHKVERLET…FAEDIQDLSK (94 aa)) lie on the Periplasmic side of the membrane.

In terms of assembly, interacts (via C-terminus) with the spanin outer lipoprotein subunit (via C-terminus). Part of the spanin complex which spans the entire periplasmic space. The spanin complex is composed of spanin inner membrane subunit and spanin outer membrane subunit.

Its subcellular location is the host cell inner membrane. Functionally, component of the spanin complex that disrupts the host outer membrane and participates in cell lysis during virus exit. The spanin complex conducts the final step in host lysis by disrupting the outer membrane after holin and endolysin action have permeabilized the inner membrane and degraded the host peptidoglycans. Host outer membrane disruption is possibly due to local fusion between the inner and outer membrane performed by the spanin complex. This chain is Spanin, inner membrane subunit (y13K), found in Enterobacteria phage T4 (Bacteriophage T4).